We begin with the raw amino-acid sequence, 116 residues long: Non-specific lipid-transfer protein 10 (116 aa).

The N-terminal stretch at M1 to A22 is a signal peptide. 4 cysteine pairs are disulfide-bonded: C26/C73, C36/C50, C51/C98, and C71/C112.

Belongs to the plant LTP family.

Plant non-specific lipid-transfer proteins transfer phospholipids as well as galactolipids across membranes. May play a role in wax or cutin deposition in the cell walls of expanding epidermal cells and certain secretory tissues. The protein is Non-specific lipid-transfer protein 10 (LTP10) of Arabidopsis thaliana (Mouse-ear cress).